We begin with the raw amino-acid sequence, 310 residues long: 17-beta-hydroxysteroid dehydrogenase type 3 (310 aa).

48–77 (GQWAVITGAGDGIGKAYSFELAKRGLNVVL) provides a ligand contact to NADP(+). Residue Ser185 participates in substrate binding. The active-site Proton acceptor is Tyr198.

It belongs to the short-chain dehydrogenases/reductases (SDR) family. 17-beta-HSD 3 subfamily. Testis.

Its subcellular location is the endoplasmic reticulum. The enzyme catalyses a 17beta-hydroxy steroid + NADP(+) = a 17-oxo steroid + NADPH + H(+). It carries out the reaction testosterone + NADP(+) = androst-4-ene-3,17-dione + NADPH + H(+). The catalysed reaction is 17beta-estradiol + NADP(+) = estrone + NADPH + H(+). It catalyses the reaction 3beta-hydroxyandrost-5-en-17-one + NADPH + H(+) = androst-5-en-3beta,17beta-diol + NADP(+). The enzyme catalyses 17beta-hydroxy-5alpha-androstan-3-one + NADP(+) = 5alpha-androstan-3,17-dione + NADPH + H(+). It carries out the reaction androsterone + NADPH + H(+) = 5alpha-androstane-3alpha,17beta-diol + NADP(+). The catalysed reaction is 3beta-hydroxy-5alpha-androstan-17-one + NADPH + H(+) = 5alpha-androstane-3beta,17beta-diol + NADP(+). It catalyses the reaction androst-4-ene-3,11,17-trione + NADPH + H(+) = 17beta-hydroxyandrost-4-ene-3,11-dione + NADP(+). The enzyme catalyses 11beta-hydroxyandrost-4-ene-3,17-dione + NADPH + H(+) = 11beta,17beta-dihydroxyandrost-4-ene-3-one + NADP(+). It functions in the pathway hormone biosynthesis; testosterone biosynthesis. It participates in steroid metabolism. Catalyzes the conversion of 17-oxosteroids to 17beta-hydroxysteroids. Favors the reduction of androstenedione to testosterone. Testosterone is the key androgen driving male development and function. Uses NADPH while the two other EDH17B enzymes use NADH. Androgens such as epiandrosterone, dehydroepiandrosterone, androsterone and androstanedione are accepted as substrates and reduced at C-17. Can reduce 11-ketoandrostenedione as well as 11beta-hydroxyandrostenedione at C-17 to the respective testosterone forms. The chain is 17-beta-hydroxysteroid dehydrogenase type 3 from Homo sapiens (Human).